A 426-amino-acid chain; its full sequence is Mannose-1-phosphate guanyltransferase alpha-B (426 aa).

This sequence belongs to the transferase hexapeptide repeat family.

The enzyme catalyses alpha-D-mannose 1-phosphate + GTP + H(+) = GDP-alpha-D-mannose + diphosphate. Its pathway is nucleotide-sugar biosynthesis; GDP-alpha-D-mannose biosynthesis; GDP-alpha-D-mannose from alpha-D-mannose 1-phosphate (GTP route): step 1/1. This chain is Mannose-1-phosphate guanyltransferase alpha-B (gmppa-b), found in Xenopus laevis (African clawed frog).